The chain runs to 1430 residues: 3'-5' RNA helicase YTHDC2 (1430 aa).

Residues 1–37 (MSRPSSVSPRQPAPGGGGGGGPSPCGPGGGGRAKGLK) are disordered. Residues 14-33 (PGGGGGGGPSPCGPGGGGRA) are compositionally biased toward gly residues. An R3H domain is found at 38–106 (DIRIDEEVKI…NRYLTVKKKD (69 aa)). The region spanning 203–369 (VKIIKENKVV…FGSCPVIYIQ (167 aa)) is the Helicase ATP-binding domain. 216-223 (GETGSGKT) contributes to the ATP binding site. The DEAH box motif lies at 316 to 319 (DEVH). ANK repeat units lie at residues 506 to 538 (TSAT…SKAS) and 539 to 571 (NGWM…FGNL). The Helicase C-terminal domain occupies 612–784 (LLYNICHSCD…ELCLHTKLLA (173 aa)). A phosphoserine mark is found at serine 1089, serine 1090, and serine 1092. Residues 1164–1174 (EQSAGLQQPSG) show a composition bias toward polar residues. The disordered stretch occupies residues 1164–1288 (EQSAGLQQPS…SPSPRPNMPV (125 aa)). A compositionally biased stretch (low complexity) spans 1191-1200 (SSWRSNNSRK). Phosphoserine is present on serine 1202. Residues 1231-1249 (KYKDRGILHPKRGTEDRSD) are compositionally biased toward basic and acidic residues. Over residues 1250 to 1264 (QSSLKSTDSSSYPSP) the composition is skewed to low complexity. Phosphoserine is present on residues serine 1263, serine 1267, and serine 1281. One can recognise a YTH domain in the interval 1288-1418 (VRYFIMKSSN…LVGEQLLQLW (131 aa)). RNA contacts are provided by residues 1294 to 1296 (KSS), tryptophan 1310, and tryptophan 1360.

The protein belongs to the DEAD box helicase family. DEAH subfamily. In terms of assembly, interacts with MEIOC; binds transcripts that regulate the mitotic cell cycle inhibiting progression into metaphase, thereby allowing meiotic prophase to proceed normally. Interacts (via ANK repeats) with XRN1. Interacts with ZCCHC4. Associates with the small ribosomal subunit. Interacts with RBM46. In terms of tissue distribution, expressed in testis. Not detected in spermatogonia next to the tubule wall but is strongly expressed in spermatocytes, suggesting that it is up-regulated in germ cells upon entry into meiosis.

The protein localises to the cytoplasm. The protein resides in the perinuclear region. The enzyme catalyses ATP + H2O = ADP + phosphate + H(+). 3'-5' RNA helicase that plays a key role in the male and female germline by promoting transition from mitotic to meiotic divisions in stem cells. Specifically recognizes and binds N6-methyladenosine (m6A)-containing RNAs, a modification present at internal sites of mRNAs and some non-coding RNAs that plays a role in the efficiency of RNA processing and stability. Essential for ensuring a successful progression of the meiotic program in the germline by regulating the level of m6A-containing RNAs. Acts by binding and promoting degradation of m6A-containing mRNAs: the 3'-5' RNA helicase activity is required for this process and RNA degradation may be mediated by XRN1 exoribonuclease. Required for both spermatogenesis and oogenesis. The chain is 3'-5' RNA helicase YTHDC2 from Homo sapiens (Human).